The primary structure comprises 456 residues: tRNA modification GTPase MnmE (456 aa).

(6S)-5-formyl-5,6,7,8-tetrahydrofolate is bound by residues R24, E81, and K120. The TrmE-type G domain maps to 216 to 379; that stretch reads GMKVVIAGRP…LREHLKECIG (164 aa). N226 contacts K(+). GTP-binding positions include 226 to 231, 245 to 251, and 270 to 273; these read NAGKSS, TAIEGTT, and DTAG. S230 is a Mg(2+) binding site. Residues T245, I247, and T250 each coordinate K(+). T251 is a binding site for Mg(2+). K456 serves as a coordination point for (6S)-5-formyl-5,6,7,8-tetrahydrofolate.

It belongs to the TRAFAC class TrmE-Era-EngA-EngB-Septin-like GTPase superfamily. TrmE GTPase family. As to quaternary structure, homodimer. Heterotetramer of two MnmE and two MnmG subunits. Requires K(+) as cofactor.

It localises to the cytoplasm. Its function is as follows. Exhibits a very high intrinsic GTPase hydrolysis rate. Involved in the addition of a carboxymethylaminomethyl (cmnm) group at the wobble position (U34) of certain tRNAs, forming tRNA-cmnm(5)s(2)U34. This chain is tRNA modification GTPase MnmE, found in Marinobacter nauticus (strain ATCC 700491 / DSM 11845 / VT8) (Marinobacter aquaeolei).